We begin with the raw amino-acid sequence, 319 residues long: Pantothenate kinase (319 aa).

G101–S108 provides a ligand contact to ATP.

This sequence belongs to the prokaryotic pantothenate kinase family.

It localises to the cytoplasm. It catalyses the reaction (R)-pantothenate + ATP = (R)-4'-phosphopantothenate + ADP + H(+). It participates in cofactor biosynthesis; coenzyme A biosynthesis; CoA from (R)-pantothenate: step 1/5. The protein is Pantothenate kinase of Clavibacter sepedonicus (Clavibacter michiganensis subsp. sepedonicus).